Here is a 209-residue protein sequence, read N- to C-terminus: Small ribosomal subunit protein uS4 (209 aa).

The 62-residue stretch at 99-160 (ARLDSVAYRM…RARASLRCKA (62 aa)) folds into the S4 RNA-binding domain.

This sequence belongs to the universal ribosomal protein uS4 family. As to quaternary structure, part of the 30S ribosomal subunit. Contacts protein S5. The interaction surface between S4 and S5 is involved in control of translational fidelity.

In terms of biological role, one of the primary rRNA binding proteins, it binds directly to 16S rRNA where it nucleates assembly of the body of the 30S subunit. Its function is as follows. With S5 and S12 plays an important role in translational accuracy. The sequence is that of Small ribosomal subunit protein uS4 from Dechloromonas aromatica (strain RCB).